The sequence spans 1214 residues: BOS complex subunit NOMO1 (1214 aa).

The N-terminal stretch at 1-23 (MRAGRCAAALLLLLLSGAGRAIG) is a signal peptide. At 24-1150 (SEDIVVGCGG…RKLPEQDIAQ (1127 aa)) the chain is on the extracellular side. Residues N42, N210, and N610 are each glycosylated (N-linked (GlcNAc...) asparagine). The stretch at 692-720 (KSAQELRREQQLAEIETRRQEREKNGKEE) forms a coiled coil. The span at 708 to 726 (TRRQEREKNGKEEGEEGRA) shows a compositional bias: basic and acidic residues. Residues 708–733 (TRRQEREKNGKEEGEEGRARPPGQEM) form a disordered region. A helical transmembrane segment spans residues 1151–1167 (GSYIALPLTLLLLLAGY). At 1168-1214 (NHDKLIPLLLQLTSRLQGVRALGQAASDSSGPEDMKRQTKKQKTRRT) the chain is on the cytoplasmic side. A disordered region spans residues 1190–1214 (GQAASDSSGPEDMKRQTKKQKTRRT). 2 positions are modified to phosphoserine: S1196 and S1197. Basic residues predominate over residues 1205 to 1214 (QTKKQKTRRT).

In terms of assembly, component of the back of Sec61 (BOS) complex, composed of NCLN/Nicalin, NOMO (NOMO1, NOMO2 or NOMO3) and TMEM147. The BOS complex is part of the multi-pass translocon (MPT) complex, composed of three subcomplexes, the GEL complex (composed of RAB5IF/OPTI and TMCO1), the BOS complex (composed of NCLN/Nicalin, NOMO and TMEM147) and the PAT complex (composed of WDR83OS/Asterix and CCDC47). The MPT complex associates with the SEC61 complex.

The protein resides in the endoplasmic reticulum membrane. Component of the multi-pass translocon (MPT) complex that mediates insertion of multi-pass membrane proteins into the lipid bilayer of membranes. The MPT complex takes over after the SEC61 complex: following membrane insertion of the first few transmembrane segments of proteins by the SEC61 complex, the MPT complex occludes the lateral gate of the SEC61 complex to promote insertion of subsequent transmembrane regions. The polypeptide is BOS complex subunit NOMO1 (Mus musculus (Mouse)).